We begin with the raw amino-acid sequence, 475 residues long: 3-isopropylmalate dehydratase large subunit 1 (475 aa).

[4Fe-4S] cluster is bound by residues cysteine 353, cysteine 413, and cysteine 416.

Belongs to the aconitase/IPM isomerase family. LeuC type 1 subfamily. As to quaternary structure, heterodimer of LeuC and LeuD. The cofactor is [4Fe-4S] cluster.

The enzyme catalyses (2R,3S)-3-isopropylmalate = (2S)-2-isopropylmalate. The protein operates within amino-acid biosynthesis; L-leucine biosynthesis; L-leucine from 3-methyl-2-oxobutanoate: step 2/4. Functionally, catalyzes the isomerization between 2-isopropylmalate and 3-isopropylmalate, via the formation of 2-isopropylmaleate. The protein is 3-isopropylmalate dehydratase large subunit 1 of Mannheimia succiniciproducens (strain KCTC 0769BP / MBEL55E).